Here is a 345-residue protein sequence, read N- to C-terminus: Adenine deaminase (345 aa).

3 residues coordinate Zn(2+): H20, H22, and H204. E207 serves as the catalytic Proton donor. D285 lines the Zn(2+) pocket. Residue D286 coordinates substrate.

The protein belongs to the metallo-dependent hydrolases superfamily. Adenosine and AMP deaminases family. Adenine deaminase type 2 subfamily. Requires Zn(2+) as cofactor.

It carries out the reaction adenine + H2O + H(+) = hypoxanthine + NH4(+). Catalyzes the hydrolytic deamination of adenine to hypoxanthine. Plays an important role in the purine salvage pathway and in nitrogen catabolism. The protein is Adenine deaminase of Ralstonia nicotianae (strain ATCC BAA-1114 / GMI1000) (Ralstonia solanacearum).